The primary structure comprises 111 residues: Probable 4-amino-4-deoxy-L-arabinose-phosphoundecaprenol flippase subunit ArnE (111 aa).

3 consecutive transmembrane segments (helical) span residues 38 to 58, 61 to 81, and 91 to 111; these read LWLG…LLVL, LPVG…TLAA, and PRHW…GSAA. In terms of domain architecture, EamA spans 40 to 109; that stretch reads LGLALICMGA…IISGIIILGS (70 aa).

It belongs to the ArnE family. In terms of assembly, heterodimer of ArnE and ArnF.

The protein localises to the cell inner membrane. It functions in the pathway bacterial outer membrane biogenesis; lipopolysaccharide biosynthesis. Translocates 4-amino-4-deoxy-L-arabinose-phosphoundecaprenol (alpha-L-Ara4N-phosphoundecaprenol) from the cytoplasmic to the periplasmic side of the inner membrane. This Salmonella enteritidis PT4 (strain P125109) protein is Probable 4-amino-4-deoxy-L-arabinose-phosphoundecaprenol flippase subunit ArnE.